A 259-amino-acid polypeptide reads, in one-letter code: Enolase-phosphatase E1 (259 aa).

2 residues coordinate Mg(2+): D16 and E18. Substrate contacts are provided by residues 151–152 and K185; that span reads SS. Residue D210 participates in Mg(2+) binding.

This sequence belongs to the HAD-like hydrolase superfamily. MasA/MtnC family. Monomer. Mg(2+) serves as cofactor.

It is found in the cytoplasm. Its subcellular location is the nucleus. It catalyses the reaction 5-methylsulfanyl-2,3-dioxopentyl phosphate + H2O = 1,2-dihydroxy-5-(methylsulfanyl)pent-1-en-3-one + phosphate. It participates in amino-acid biosynthesis; L-methionine biosynthesis via salvage pathway; L-methionine from S-methyl-5-thio-alpha-D-ribose 1-phosphate: step 3/6. The protein operates within amino-acid biosynthesis; L-methionine biosynthesis via salvage pathway; L-methionine from S-methyl-5-thio-alpha-D-ribose 1-phosphate: step 4/6. Its function is as follows. Bifunctional enzyme that catalyzes the enolization of 2,3-diketo-5-methylthiopentyl-1-phosphate (DK-MTP-1-P) into the intermediate 2-hydroxy-3-keto-5-methylthiopentenyl-1-phosphate (HK-MTPenyl-1-P), which is then dephosphorylated to form the acireductone 1,2-dihydroxy-3-keto-5-methylthiopentene (DHK-MTPene). This Xenopus tropicalis (Western clawed frog) protein is Enolase-phosphatase E1 (enoph1).